The chain runs to 295 residues: Putative NADH-ubiquinone oxidoreductase MJ0520 (295 aa).

The next 8 helical transmembrane spans lie at 8-28 (LIGA…LLGL), 69-89 (LYIF…IIAI), 129-149 (VFSA…YLTT), 163-183 (IHGS…ILLV), 199-219 (IVSG…YIAE), 220-240 (AIAY…PLVI), 243-263 (PVLT…VNGL), and 273-293 (VMLQ…RLIV).

It belongs to the complex I subunit 1 family.

It localises to the cell membrane. The enzyme catalyses a ubiquinone + NADH + 5 H(+)(in) = a ubiquinol + NAD(+) + 4 H(+)(out). In Methanocaldococcus jannaschii (strain ATCC 43067 / DSM 2661 / JAL-1 / JCM 10045 / NBRC 100440) (Methanococcus jannaschii), this protein is Putative NADH-ubiquinone oxidoreductase MJ0520.